A 457-amino-acid chain; its full sequence is MQASRYSIEAEPGWYVSVQQPEEAVAAEEWSPLLSNEPRRQGSSGASFGLSVFNVMNAIMGSGILGLAYVMANTGILGFSFLLLLVALLASYSVHLLLAMCIHTAVTSYEDLGLFAFGLPGKVVVAGTIIIQNIGAMSSYLLIIKTELPAAISEVLPSDHSGAWYLDGQMLLIIICVGIVFPLSLLPKIGFLGYTSSLSFFFMVFFALVVVIKKWAVPCPLTLNCINAVFQISNATDDCKPKLFHFSKESVYAIPTMAFSFLCHTSVLPIYCELRSPSKKRMQNVTNTAIALSFLVYFVSALFGYLTFYDKVESELLQGYSKYLPHDAAVMAVKLCILFAVLLTVPLIHFPARKALMMILFSNYPFSWIRHSLTTLALNIIIVLLAIYVPDIRNVFGVVGASTSTCLIFVFPGLFYLKLSREDFLSWKKLGALSLLSTGTVVGSFSLVLIILDWVNK.

At Met1 the chain carries N-acetylmethionine. Phosphoserine occurs at positions 4 and 7. 5 helical membrane-spanning segments follow: residues 48–68 (FGLS…LGLA), 70–90 (VMAN…ALLA), 112–132 (LGLF…IIIQ), 171–191 (LLII…KIGF), and 192–212 (LGYT…VVVI). Cys219 and Cys239 are disulfide-bonded. N-linked (GlcNAc...) asparagine glycosylation occurs at Asn234. A helical membrane pass occupies residues 251–271 (VYAIPTMAFSFLCHTSVLPIY). Residue Asn284 is glycosylated (N-linked (GlcNAc...) asparagine). Transmembrane regions (helical) follow at residues 289–309 (AIAL…LTFY), 328–348 (AAVM…VPLI), 372–392 (SLTT…VPDI), 395–415 (VFGV…PGLF), and 432–452 (ALSL…LIIL).

Belongs to the amino acid/polyamine transporter 2 family.

The protein resides in the cell membrane. It localises to the synapse. It carries out the reaction L-glutamine(out) = L-glutamine(in). It catalyses the reaction L-glutamate(out) = L-glutamate(in). Functionally, amino acid transporter with an apparent selectivity for L-glutamine and L-glutamate. May facilitate glutamine uptake in excitatory neurons. The transport mechanism remains to be elucidated. The protein is Solute carrier family 38 member 6 of Rattus norvegicus (Rat).